Consider the following 464-residue polypeptide: MSASLLEKQSTGGAIARVGFEYQDAFVLKNLPLWLSESAFSHIVSESIGDVEVCYFSLEKDFQRVMYEAKNHSLTSTDFWKEIKRFKEAFDIPSSEFTRFGLVCPLYTSTLHPFLAQIERIRGVGSSYSADSVILQKSRQDITQWCSDKGFETSLAEFALDHVDFLSFNAEDSDSVFIGEIEEKLSNIELTTRKAKQLRDQFKNLISRSSFGPIHRKDFENFICHALEEDRTQWLSDPIKINLSASSSQHQDLNLDISDFNGPDRAQKTSSDWNSLIKKAVSIGDFIHNSGDRRTLLIDGKQRMSTACMLGYVFSATRNFLLEIEHNGLAYRTDDHKQKEGQFFNKTNSIELHGKTEAIVTIGFPTAIGKDIDSTINEIKNLPRLNLESSNVIDNMETLNLAVKEAKSALVSFKAENKLSKLHLFIKAPSVFAMVLGHRLNGVCNIQLYDWVNGEYMPTAELNI.

The tract at residues 1 to 228 is N-terminal endonuclease domain; the sequence is MSASLLEKQS…FENFICHALE (228 aa). Residues 229–464 form a C-terminal SAVED domain region; the sequence is EDRTQWLSDP…EYMPTAELNI (236 aa).

Belongs to the Cap4 nuclease family. In terms of assembly, a monomer in the absence of cAAA, in its presence it forms oligomers.

Its activity is regulated as follows. DNase activity is activated upon ligand binding. Effector DNase of a CBASS antivirus system. CBASS (cyclic oligonucleotide-based antiphage signaling system) provides immunity against bacteriophage. The CD-NTase protein synthesizes cyclic nucleotides in response to infection; these serve as specific second messenger signals. The signals activate a diverse range of effectors, leading to bacterial cell death and thus abortive phage infection. A type II-C CBASS system. Its function is as follows. Probably in the presence of its endogenous cyclic nucleotide (synthesized by the cognate CD-NTase protein in the CBASS operon), or of 2',3',3'-cyclic AMP-AMP-AMP (cAAA) synthesized by Acinetobacter sp. ATCC 27244, endonucleolytically degrades dsDNA in a non-sequence specific manner. It is not activated by other cyclic nucleotides. The polypeptide is CD-NTase-associated protein 4 (Moraxella osloensis).